A 396-amino-acid polypeptide reads, in one-letter code: Subtilisin-like protease 5 (396 aa).

Positions 1 to 20 (MTGFFTILSFSLAALSVTNA) are cleaved as a signal peptide. A propeptide spanning residues 21–116 (AQILSVPKGA…VEPDAIISQH (96 aa)) is cleaved from the precursor. The 77-residue stretch at 37 to 113 (YIVVMKDDTS…VAFVEPDAII (77 aa)) folds into the Inhibitor I9 domain. A glycan (N-linked (GlcNAc...) asparagine) is linked at Asn63. Positions 125–396 (PWGLSRLSNR…SRLLYNGSGR (272 aa)) constitute a Peptidase S8 domain. Active-site charge relay system residues include Asp156 and His187. Residues Asn230 and Asn248 are each glycosylated (N-linked (GlcNAc...) asparagine). The active-site Charge relay system is Ser342. The segment covering 376 to 389 (PTIRNPGPDTTSRL) has biased composition (polar residues). Residues 376 to 396 (PTIRNPGPDTTSRLLYNGSGR) are disordered. The N-linked (GlcNAc...) asparagine glycan is linked to Asn392.

It belongs to the peptidase S8 family.

Its subcellular location is the secreted. Secreted subtilisin-like serine protease with keratinolytic activity that contributes to pathogenicity. The polypeptide is Subtilisin-like protease 5 (SUB5) (Trichophyton verrucosum (Cattle ringworm fungus)).